Here is a 124-residue protein sequence, read N- to C-terminus: Large-conductance mechanosensitive channel (124 aa).

The next 2 membrane-spanning stretches (helical) occupy residues 15–35 (MDLA…NSLV) and 67–87 (GSFL…FFLI).

This sequence belongs to the MscL family. In terms of assembly, homopentamer.

It is found in the cell membrane. In terms of biological role, channel that opens in response to stretch forces in the membrane lipid bilayer. May participate in the regulation of osmotic pressure changes within the cell. The sequence is that of Large-conductance mechanosensitive channel from Lactobacillus johnsonii (strain CNCM I-12250 / La1 / NCC 533).